The chain runs to 308 residues: E3 ubiquitin-protein ligase SINAT2 (308 aa).

An RING-type zinc finger spans residues 60–96 (CPVCTNLMYPPIHQCPNGHTLCSNCKLRVQNTCPTCR). Residues 110 to 303 (VAESLEVPCR…QELKLRVTGR (194 aa)) are SBD. An SIAH-type zinc finger spans residues 113–173 (SLEVPCRYQN…LVVHLKDDHK (61 aa)). 8 residues coordinate Zn(2+): C118, C125, H137, C141, C148, C155, H167, and H172.

The protein belongs to the SINA (Seven in absentia) family. As to quaternary structure, interacts with RAP2-2. Interacts with SINAT6. Interacts with ATG6 and TRAF1A. Interacts with WAV3. Interacts with FREE1. Interacts with ELC/VPS23A.

Its subcellular location is the endosome. The protein resides in the multivesicular body. It is found in the cytoplasmic vesicle. The protein localises to the autophagosome. It carries out the reaction S-ubiquitinyl-[E2 ubiquitin-conjugating enzyme]-L-cysteine + [acceptor protein]-L-lysine = [E2 ubiquitin-conjugating enzyme]-L-cysteine + N(6)-ubiquitinyl-[acceptor protein]-L-lysine.. Its pathway is protein modification; protein ubiquitination. E3 ubiquitin-protein ligase that mediates ubiquitination and subsequent proteasomal degradation of target proteins. E3 ubiquitin ligases accept ubiquitin from an E2 ubiquitin-conjugating enzyme in the form of a thioester and then directly transfers the ubiquitin to targeted substrates. It probably triggers the ubiquitin-mediated degradation of different substrates. Mediates the proteasomal-dependent degradation of ATG6, a component of the autophagosome complex. Requires TRAF1A/MUSE14 and TRAF1B/MUSE13 to target ATG6 for ubiquitination and subsequent regulation of autophagosome assembly. Modulates directly the ubiquitination and proteasomal-dependent degradation of FREE1, a component of the ESCRT-I complex. Modulates directly the ubiquitination and proteasomal-dependent degradation of ELC/VPS23A, a component of the ESCRT-I complex. The sequence is that of E3 ubiquitin-protein ligase SINAT2 from Arabidopsis thaliana (Mouse-ear cress).